Reading from the N-terminus, the 184-residue chain is Myeloproliferative leukemia protein (184 aa).

The WSXWS motif signature appears at W26 to S30. A helical transmembrane segment spans residues I44 to L64. Residues L80–H88 carry the Box 1 motif motif.

Belongs to the type I cytokine receptor family. Type 1 subfamily.

The protein resides in the membrane. In terms of biological role, truncated form of the receptor for thrombopoietin. This is Myeloproliferative leukemia protein (V-MPL) from Mus musculus (Mouse).